The primary structure comprises 236 residues: Small ribosomal subunit protein uS2c (236 aa).

It belongs to the universal ribosomal protein uS2 family.

The protein resides in the plastid. It is found in the chloroplast. The chain is Small ribosomal subunit protein uS2c (rps2) from Lotus japonicus (Lotus corniculatus var. japonicus).